The chain runs to 830 residues: Protein translocase subunit SecA (830 aa).

ATP contacts are provided by residues Gln86, 104 to 108 (GEGKT), and Asp491. Zn(2+)-binding residues include Cys813, Cys815, Cys824, and Cys825.

The protein belongs to the SecA family. As to quaternary structure, monomer and homodimer. Part of the essential Sec protein translocation apparatus which comprises SecA, SecYEG and auxiliary proteins SecDF. Other proteins may also be involved. Zn(2+) is required as a cofactor.

It is found in the cell membrane. The protein resides in the cytoplasm. It catalyses the reaction ATP + H2O + cellular proteinSide 1 = ADP + phosphate + cellular proteinSide 2.. Functionally, part of the Sec protein translocase complex. Interacts with the SecYEG preprotein conducting channel. Has a central role in coupling the hydrolysis of ATP to the transfer of proteins into and across the cell membrane, serving as an ATP-driven molecular motor driving the stepwise translocation of polypeptide chains across the membrane. The sequence is that of Protein translocase subunit SecA from Syntrophomonas wolfei subsp. wolfei (strain DSM 2245B / Goettingen).